Here is an 875-residue protein sequence, read N- to C-terminus: Protein SEY1 (875 aa).

At 1–749 the chain is on the cytoplasmic side; it reads MVANGHFASN…KRSAIGGITQ (749 aa). One can recognise a GB1/RHD3-type G domain in the interval 49–307; sequence GFNYHLISVF…IPADGFAVYA (259 aa). 59-66 serves as a coordination point for GTP; sequence GSQSTGKS. The stretch at 482–506 forms a coiled coil; that stretch reads SNYQQELSLYQKDLERISGQLRRDE. The tract at residues 676 to 704 is disordered; it reads LDKWIGHTPSSATPADEEDLTPIGGVDED. Residues 690–704 are compositionally biased toward acidic residues; sequence ADEEDLTPIGGVDED. Residues 750 to 770 traverse the membrane as a helical segment; sequence VPLYFYGLLLALGWNEIMAVL. Residues 771-773 lie on the Lumenal side of the membrane; sequence RNP. Residues 774 to 794 traverse the membrane as a helical segment; the sequence is AYFFLLFVCAIGAYVTYQLNL. Residues 795-875 lie on the Cytoplasmic side of the membrane; that stretch reads WGPIIKMTEA…ADDDDVDDDF (81 aa). Positions 831-875 are disordered; it reads MAMSGARNATEEHEMSNLNRKSGERGGQKYRGEDVADDDDVDDDF. The segment covering 839 to 864 has biased composition (basic and acidic residues); it reads ATEEHEMSNLNRKSGERGGQKYRGED. The span at 865-875 shows a compositional bias: acidic residues; the sequence is VADDDDVDDDF.

The protein belongs to the TRAFAC class dynamin-like GTPase superfamily. GB1/RHD3 GTPase family. RHD3 subfamily.

The protein localises to the endoplasmic reticulum membrane. Cooperates with the reticulon proteins and tubule-shaping DP1 family proteins to generate and maintain the structure of the tubular endoplasmic reticulum network. Has GTPase activity, which is required for its function in ER organization. The chain is Protein SEY1 from Ajellomyces dermatitidis (strain ER-3 / ATCC MYA-2586) (Blastomyces dermatitidis).